The chain runs to 542 residues: Organic anion transporter 3 (542 aa).

Residues 1 to 20 (MTFSEILDRVGSMGRFQFLH) are Cytoplasmic-facing. A Phosphoserine modification is found at serine 4. A helical membrane pass occupies residues 21–41 (VAILGLPILNMANHNLLQIFT). Over 42-123 (AATPVHHCRP…LVCNSNKLKE (82 aa)) the chain is Extracellular. A glycan (N-linked (GlcNAc...) asparagine) is linked at asparagine 86. Residues 124–144 (MAQSIFMAGILIGGLVLGDLS) form a helical membrane-spanning segment. The Cytoplasmic portion of the chain corresponds to 145-154 (DRFGRRPILT). A helical membrane pass occupies residues 155–175 (CSYLLLAASGSGAAFSPTFPI). A topological domain (extracellular) is located at residue tyrosine 176. A helical membrane pass occupies residues 177–197 (MVFRFLCGFGISGITLSTVIL). Topologically, residues 198 to 212 (NVEWVPTRMRAIMST) are cytoplasmic. The helical transmembrane segment at 213–233 (ALGYCYTFGQFILPGLAYAIP) threads the bilayer. The Extracellular portion of the chain corresponds to 234–236 (QWR). The chain crosses the membrane as a helical span at residues 237–257 (WLQLTVSIPFFIFFLSSWWTP). Topologically, residues 258-327 (ESIRWLVLSG…FRIPMLRRMT (70 aa)) are cytoplasmic. Residues 328–348 (FCLSLAWFATGFAYYSLAMGV) traverse the membrane as a helical segment. Residues 349–354 (EEFGVN) are Extracellular-facing. The chain crosses the membrane as a helical span at residues 355–375 (LYILQIIFGGVDVPAKFITIL). Over 376–386 (SLSYLGRHTTQ) the chain is Cytoplasmic. Residues 387-407 (AAALLLAGGAILALTFVPLDL) form a helical membrane-spanning segment. The Extracellular segment spans residues 408–471 (QTVRTVLAVF…LVKITGEVQP (64 aa)). A helical membrane pass occupies residues 472–492 (FIPNIIYGITALLGGSAAFFL). Residues 493-542 (PETLNQPLPETIEDLENWSLRAKKPKQEPEVEKASQRIPLQPHGPGLGSS) are Cytoplasmic-facing. Positions 515–542 (KKPKQEPEVEKASQRIPLQPHGPGLGSS) are disordered. A compositionally biased stretch (basic and acidic residues) spans 517–527 (PKQEPEVEKAS).

The protein belongs to the major facilitator (TC 2.A.1) superfamily. Organic cation transporter (TC 2.A.1.19) family.

Its subcellular location is the basolateral cell membrane. The catalysed reaction is estrone 3-sulfate(out) + glutarate(in) = estrone 3-sulfate(in) + glutarate(out). The enzyme catalyses estrone 3-sulfate(in) + 2-oxoglutarate(out) = estrone 3-sulfate(out) + 2-oxoglutarate(in). It catalyses the reaction glutarate(in) + 2-oxoglutarate(out) = glutarate(out) + 2-oxoglutarate(in). It carries out the reaction urate(in) + 2-oxoglutarate(out) = urate(out) + 2-oxoglutarate(in). The catalysed reaction is taurocholate(out) + glutarate(in) = taurocholate(in) + glutarate(out). The enzyme catalyses dehydroepiandrosterone 3-sulfate(out) + glutarate(in) = dehydroepiandrosterone 3-sulfate(in) + glutarate(out). It catalyses the reaction prostaglandin F2alpha(out) + glutarate(in) = prostaglandin F2alpha(in) + glutarate(out). It carries out the reaction prostaglandin F2alpha(out) + 2-oxoglutarate(in) = prostaglandin F2alpha(in) + 2-oxoglutarate(out). The catalysed reaction is (R)-carnitine(out) + 2-oxoglutarate(in) = (R)-carnitine(in) + 2-oxoglutarate(out). The enzyme catalyses glutarate(in) + (R)-carnitine(out) = glutarate(out) + (R)-carnitine(in). It catalyses the reaction prostaglandin E2(out) + 2-oxoglutarate(in) = prostaglandin E2(in) + 2-oxoglutarate(out). It carries out the reaction prostaglandin E2(out) + glutarate(in) = prostaglandin E2(in) + glutarate(out). The catalysed reaction is urate(in) + glutarate(out) = urate(out) + glutarate(in). The enzyme catalyses taurocholate(out) + 2-oxoglutarate(in) = taurocholate(in) + 2-oxoglutarate(out). It catalyses the reaction dehydroepiandrosterone 3-sulfate(out) + 2-oxoglutarate(in) = dehydroepiandrosterone 3-sulfate(in) + 2-oxoglutarate(out). It carries out the reaction kynurenate(out) + a dicarboxylate(in) = kynurenate(in) + a dicarboxylate(out). The catalysed reaction is (indol-3-yl)acetate(out) + a dicarboxylate(in) = (indol-3-yl)acetate(in) + a dicarboxylate(out). The enzyme catalyses indoxyl sulfate(out) + a dicarboxylate(in) = indoxyl sulfate(in) + a dicarboxylate(out). It catalyses the reaction N-benzoylglycine(out) + a dicarboxylate(in) = N-benzoylglycine(in) + a dicarboxylate(out). It carries out the reaction 3-carboxy-4-methyl-5-propyl-2-furanpropanoate(out) + a dicarboxylate(in) = 3-carboxy-4-methyl-5-propyl-2-furanpropanoate(in) + a dicarboxylate(out). The catalysed reaction is (6R)-L-erythro-5,6,7,8-tetrahydrobiopterin(out) + a dicarboxylate(in) = (6R)-L-erythro-5,6,7,8-tetrahydrobiopterin(in) + a dicarboxylate(out). The enzyme catalyses L-erythro-7,8-dihydrobiopterin(out) + a dicarboxylate(in) = L-erythro-7,8-dihydrobiopterin(in) + a dicarboxylate(out). It catalyses the reaction L-sepiapterin(out) + a dicarboxylate(in) = L-sepiapterin(in) + a dicarboxylate(out). Its function is as follows. Functions as an organic anion/dicarboxylate exchanger that couples organic anion uptake indirectly to the sodium gradient. Transports organic anions such as estrone 3-sulfate (E1S) and urate in exchange for dicarboxylates such as glutarate or ketoglutarate (2-oxoglutarate). Plays an important role in the excretion of endogenous and exogenous organic anions, especially from the kidney and the brain. E1S transport is pH- and chloride-dependent and may also involve E1S/cGMP exchange. Responsible for the transport of prostaglandin E2 (PGE2) and prostaglandin F2(alpha) (PGF2(alpha)) in the basolateral side of the renal tubule. Involved in the transport of neuroactive tryptophan metabolites kynurenate and xanthurenate. Functions as a biopterin transporters involved in the uptake and the secretion of coenzymes tetrahydrobiopterin (BH4), dihydrobiopterin (BH2) and sepiapterin to urine, thereby determining baseline levels of blood biopterins. May be involved in the basolateral transport of steviol, a metabolite of the popular sugar substitute stevioside. May participate in the detoxification/ renal excretion of drugs and xenobiotics, such as the histamine H(2)-receptor antagonists fexofenadine and cimetidine, the antibiotic benzylpenicillin (PCG), the anionic herbicide 2,4-dichloro-phenoxyacetate (2,4-D), the diagnostic agent p-aminohippurate (PAH), the antiviral acyclovir (ACV), and the mycotoxin ochratoxin (OTA), by transporting these exogenous organic anions across the cell membrane in exchange for dicarboxylates such as 2-oxoglutarate. Contributes to the renal uptake of potent uremic toxins (indoxyl sulfate (IS), indole acetate (IA), hippurate/N-benzoylglycine (HA) and 3-carboxy-4-methyl-5-propyl-2-furanpropionate (CMPF)), pravastatin, PCG, E1S and dehydroepiandrosterone sulfate (DHEAS), and is partly involved in the renal uptake of temocaprilat (an angiotensin-converting enzyme (ACE) inhibitor). May contribute to the release of cortisol in the adrenals. Involved in one of the detoxification systems on the choroid plexus (CP), removes substrates such as E1S or taurocholate (TC), PCG, 2,4-D and PAH, from the cerebrospinal fluid (CSF) to the blood for eventual excretion in urine and bile. Also contributes to the uptake of several other organic compounds such as the prostanoids prostaglandin E(2) and prostaglandin F(2-alpha), L-carnitine, and the therapeutic drugs allopurinol, 6-mercaptopurine (6-MP) and 5-fluorouracil (5-FU). Mediates the transport of PAH, PCG, and the statins pravastatin and pitavastatin, from the cerebrum into the blood circulation across the blood-brain barrier (BBB). In summary, plays a role in the efflux of drugs and xenobiotics, helping reduce their undesired toxicological effects on the body. The chain is Organic anion transporter 3 (SLC22A8) from Pongo abelii (Sumatran orangutan).